A 61-amino-acid polypeptide reads, in one-letter code: Potassium channel toxin alpha-KTx 15.6 (61 aa).

Positions 1–23 (MKAFYGMLVIFILCSTCYISVDS) are cleaved as a signal peptide. A Pyrrolidone carboxylic acid modification is found at Q24. Disulfide bonds link C31-C52, C37-C57, and C41-C59.

Belongs to the short scorpion toxin superfamily. Potassium channel inhibitor family. Alpha-KTx 15 subfamily. As to expression, expressed by the venom gland.

Its subcellular location is the secreted. In terms of biological role, irreversibly blocks the A-type voltage-gated potassium channels in rat cerebellum granular cells (190 nM induce 50% inhibitory effect) (IC(50)=190 nM). Also weakly inhibits Kv1.2/KCNA2 and Kv1.3/KCNA3. The polypeptide is Potassium channel toxin alpha-KTx 15.6 (Tityus discrepans (Venezuelan scorpion)).